The primary structure comprises 338 residues: Phosphatidylglycerol--prolipoprotein diacylglyceryl transferase (338 aa).

Helical transmembrane passes span 24–44 (WYGL…SYQV), 67–87 (LFIW…TLVY), 115–135 (GFQG…VILW), and 141–161 (FKFA…YTFG). Arg-162 contributes to the a 1,2-diacyl-sn-glycero-3-phospho-(1'-sn-glycerol) binding site. 3 helical membrane-spanning segments follow: residues 224-244 (PSQL…LWLL), 252-272 (GFLV…IEYF), and 304-324 (GQIL…ILYL).

It belongs to the Lgt family.

Its subcellular location is the cell inner membrane. It carries out the reaction L-cysteinyl-[prolipoprotein] + a 1,2-diacyl-sn-glycero-3-phospho-(1'-sn-glycerol) = an S-1,2-diacyl-sn-glyceryl-L-cysteinyl-[prolipoprotein] + sn-glycerol 1-phosphate + H(+). It functions in the pathway protein modification; lipoprotein biosynthesis (diacylglyceryl transfer). Functionally, catalyzes the transfer of the diacylglyceryl group from phosphatidylglycerol to the sulfhydryl group of the N-terminal cysteine of a prolipoprotein, the first step in the formation of mature lipoproteins. The sequence is that of Phosphatidylglycerol--prolipoprotein diacylglyceryl transferase from Treponema denticola (strain ATCC 35405 / DSM 14222 / CIP 103919 / JCM 8153 / KCTC 15104).